A 190-amino-acid polypeptide reads, in one-letter code: Cysteine dioxygenase (190 aa).

The Fe cation site is built by His78, His80, and His132. Positions 85–149 (CFVKILDGEL…SNGAVSLHLY (65 aa)) form a cross-link, 3'-(S-cysteinyl)-tyrosine (Cys-Tyr).

This sequence belongs to the cysteine dioxygenase family. The cofactor is Fe cation. In terms of processing, the thioether cross-link between Cys-85 and Tyr-149 plays a structural role through stabilizing the Fe(2+) ion, and prevents the production of highly damaging free hydroxyl radicals by holding the oxygen radical via hydroxyl hydrogen.

The enzyme catalyses L-cysteine + O2 = 3-sulfino-L-alanine + H(+). It functions in the pathway organosulfur biosynthesis; taurine biosynthesis; hypotaurine from L-cysteine: step 1/2. This chain is Cysteine dioxygenase (cdo-1), found in Caenorhabditis briggsae.